Reading from the N-terminus, the 1050-residue chain is MDSPSAPVPAHKLVDRLKDQTPRHPSPQPTHVSYPKVNGNGHRVLRSATVGYVAPVFQGKAEQMKQVKNIIVQGGWIPETLVDGQIAWFYNELGIDDVYFQLENPQAVANHITSLYAAKVAAFSREDKREEIRLDMEASDHAIYIDTSEPGMTSFDGPRYEHRLESKYLDGDDTSKRFRVETFRSPGVLGQKENSKAALRCYFVYQCLFVDSNADPKETRLEVISDRMFLAKATKNTKQIYQDIIQVAVSRHGPVIEVFDIEGSEEMRLVVAFRSRTAKGIFSALSDLYHYYGVTSSRKYVEQFSNGITVMSIYLRPAANIDGKHPPLEQSIHQITKEISLLYCLPQNKFHNMFASGELSLQETIYAHCVWVFVQHFLNRLGTEYTSLIAALDPKNNSHVEILSKMKKRLRTETFTPDYILEIISSHPQLVRALYASFASVHLRVGSDYDRHLIAPTPVMEVLSDARLKEKITKDVSNEHEEMVMTAFRVFNNAVLKTNFFTPTKVALSFRLNPSFLPEVEYPKPLYGMFLVITSESRGFHLRFKDIARGGIRIVKSRSKEAYQINARNLFDENYGLASTQQRKNKDIPEGGSKGVILLDPKQQDRHREAFEKYIDSILDLLLKAETPGIKNPIVDLYGKEEILFMGPDENTADLVDWATEHARARGAPWWKSFFTGKSPRLGGIPHDSYGMTTLSVREYVKGIYRKLELDPSKIRKMQTGGPDGDLGSNEILLSNETYTAIVDGSGVLCDPNGIDKDELRRLAKARAMISNFDIAKLSKDGYRVLCDDTNVTLPNGEVVHNGTAFRNTYHLRDNGITDMFVPCGGRPESIDLSSVNKLIKDGKSTIPYIVEGANLFITQDAKLRLEEAGCIVYKDASANKGGVTSSSLEVLASLSFDDKGFVTHMCHDSRGNAPEFYQAYVKEVQNKIQDNARLEFEAIWREHEQTGLPRSVLSDKLSLAITSLDEDLQRSELWDNEKIRRSVLADALPNLLINKIGLDTIIERVPDSYLRAIFGSYLASRFVYEFGSSPSQFAFYDFMSKRMGNINKE.

The interval 1–39 is disordered; that stretch reads MDSPSAPVPAHKLVDRLKDQTPRHPSPQPTHVSYPKVNG. The segment covering 12-22 has biased composition (basic and acidic residues); sequence KLVDRLKDQTP. K594 is a catalytic residue.

The protein belongs to the Glu/Leu/Phe/Val dehydrogenases family. As to quaternary structure, homotetramer.

It catalyses the reaction L-glutamate + NAD(+) + H2O = 2-oxoglutarate + NH4(+) + NADH + H(+). The protein is NAD-specific glutamate dehydrogenase (gdh-1) of Neurospora crassa (strain ATCC 24698 / 74-OR23-1A / CBS 708.71 / DSM 1257 / FGSC 987).